The following is a 163-amino-acid chain: MPSFDIVSEIDMQEVRNAVENATRDLSTRWDFRNVPASFELNEKSQSIKVASESDFQVQQLVDILREKLVKRGIEGGALEIPEEMEHSGKTYSVEAKLKQGIETTLAKQLIKLIKDSKLKVQAQIQGEQVRVTGKARDDLQGVMALIRGGNLGQPFQFTNFRD.

This sequence belongs to the YajQ family.

Nucleotide-binding protein. In Pectobacterium atrosepticum (strain SCRI 1043 / ATCC BAA-672) (Erwinia carotovora subsp. atroseptica), this protein is Nucleotide-binding protein ECA1137.